The primary structure comprises 88 residues: MATRIRLRRMGAKKSPFYRLVVADSRYPRDGRFIEELGYYNPSTTPATVKIDEEKALKWLASGAKPSDTARSLLQKQGIMARFAEIRK.

This sequence belongs to the bacterial ribosomal protein bS16 family.

The protein is Small ribosomal subunit protein bS16 of Syntrophomonas wolfei subsp. wolfei (strain DSM 2245B / Goettingen).